The chain runs to 1063 residues: Probable hemoglobin and hemoglobin-haptoglobin-binding protein 1 (1063 aa).

A signal peptide spans 1 to 24; it reads MTNFKFSLLACSIAFALNASIAYA. 7 tandem repeats follow at residues 26-29, 30-33, 34-37, 38-41, 42-45, 46-49, and 50-53. The segment at 26–53 is 7 X 4 AA tandem repeats of Q-P-T-N; the sequence is QPTNQPTNQPTNQPTNQPTNQPTNQPTN. A compositionally biased stretch (low complexity) spans 28 to 55; that stretch reads TNQPTNQPTNQPTNQPTNQPTNQPTNQN. Residues 28 to 57 form a disordered region; the sequence is TNQPTNQPTNQPTNQPTNQPTNQPTNQNSN. A TonB box motif is present at residues 63 to 70; the sequence is EQINVSGS. One can recognise a TBDR plug domain in the interval 66–200; the sequence is NVSGSSENIN…LGGSVIFETK (135 aa). One can recognise a TBDR beta-barrel domain in the interval 208 to 1063; that stretch reads DKDYYLSYKR…NYRMSVQFEF (856 aa). A TonB C-terminal box motif is present at residues 1046 to 1063; it reads NRFYAPGRNYRMSVQFEF.

The protein belongs to the TonB-dependent receptor family. Hemoglobin/haptoglobin binding protein subfamily.

The protein resides in the cell outer membrane. In terms of biological role, acts as a receptor for hemoglobin or the hemoglobin/haptoglobin complex of the human host and is required for heme uptake. This chain is Probable hemoglobin and hemoglobin-haptoglobin-binding protein 1, found in Haemophilus influenzae (strain ATCC 51907 / DSM 11121 / KW20 / Rd).